Here is a 124-residue protein sequence, read N- to C-terminus: Glucagon-1 (124 aa).

An N-terminal signal peptide occupies residues 1 to 25 (MKRIHSLAGILLVLGLIQSSCRVLM). A disordered region spans residues 28–54 (ADPSSSLEADSTLKDEPRELSNMKRHS). The span at 38–54 (STLKDEPRELSNMKRHS) shows a compositional bias: basic and acidic residues. Residues 84 to 88 (SGVAE) constitute a propeptide that is removed on maturation.

Belongs to the glucagon family.

Its subcellular location is the secreted. In terms of biological role, glucagon plays a key role in glucose metabolism and homeostasis. Regulates blood glucose by increasing gluconeogenesis and decreasing glycolysis. The sequence is that of Glucagon-1 (gcg1) from Lophius americanus (American angler).